Reading from the N-terminus, the 452-residue chain is Tripartite motif-containing protein 51G (452 aa).

The segment at C15–K56 adopts an RING-type zinc-finger fold. The B box-type zinc-finger motif lies at S88 to T129. Zn(2+) is bound by residues C93, H96, C115, and H121. In terms of domain architecture, B30.2/SPRY spans E269–F452.

The protein belongs to the TRIM/RBCC family.

In Homo sapiens (Human), this protein is Tripartite motif-containing protein 51G.